The chain runs to 122 residues: Ribonuclease pancreatic (122 aa).

A compositionally biased stretch (basic and acidic residues) spans 1–16 (ETPAEKFQRQHMDTEH). Residues 1-20 (ETPAEKFQRQHMDTEHSTAS) form a disordered region. Substrate-binding residues include K6 and R9. H11 acts as the Proton acceptor in catalysis. Cystine bridges form between C25–C83, C39–C94, C57–C109, and C64–C71. Residues 40–44 (KPLNT), K65, and R84 contribute to the substrate site. The active-site Proton donor is H117.

The protein belongs to the pancreatic ribonuclease family. In terms of assembly, monomer. Interacts with and forms tight 1:1 complexes with RNH1. Dimerization of two such complexes may occur. Interaction with RNH1 inhibits this protein. Post-translationally, not glycosylated although the sequence N-V-T, a recognition site for carbohydrate attachment, is present. As to expression, pancreas.

It is found in the secreted. It catalyses the reaction an [RNA] containing cytidine + H2O = an [RNA]-3'-cytidine-3'-phosphate + a 5'-hydroxy-ribonucleotide-3'-[RNA].. It carries out the reaction an [RNA] containing uridine + H2O = an [RNA]-3'-uridine-3'-phosphate + a 5'-hydroxy-ribonucleotide-3'-[RNA].. Functionally, endonuclease that catalyzes the cleavage of RNA on the 3' side of pyrimidine nucleotides. Acts on single-stranded and double-stranded RNA. The chain is Ribonuclease pancreatic (RNASE1) from Osphranter rufus (Red kangaroo).